The primary structure comprises 399 residues: Dual specificity mitogen-activated protein kinase kinase 4 (399 aa).

Residues 1–40 (MAAPSPSGGGGSGGGSGSGTPGPVGSPAPGHPAVSSMQGK) form a disordered region. At Ala2 the chain carries N-acetylalanine. Gly residues predominate over residues 7-22 (SGGGGSGGGSGSGTPG). The tract at residues 37–52 (MQGKRKALKLNFANPP) is d domain. Residue Arg58 is modified to Asymmetric dimethylarginine; alternate. Arg58 carries the omega-N-methylarginine; alternate modification. Position 90 is a phosphoserine (Ser90). The Protein kinase domain occupies 102-367 (LKDLGEIGRG…YKELLKHPFI (266 aa)). Residues 108 to 116 (IGRGAYGSV) and Lys131 each bind ATP. Asp229 serves as the catalytic Proton acceptor. Residue Ser257 is modified to Phosphoserine; by MAP3K. Thr261 bears the Phosphothreonine; by MAP3K mark. The tract at residues 364-387 (HPFILMYEERAVEVACYVCKILDQ) is DVD domain.

It belongs to the protein kinase superfamily. STE Ser/Thr protein kinase family. MAP kinase kinase subfamily. As to quaternary structure, interacts with SPAG9. Interacts (via its D domain) with its substrates MAPK8/JNK1, MAPK9/JNK2, MAPK10/JNK3, MAPK11 and MAPK14. Interacts (via its DVD domain) with MAP3Ks activators like MAP3K1/MEKK1 and MAP3K11/MLK3. Interacts with ARRB1, ARRB2 and MAPK8IP3/JIP3. Activated by phosphorylation on Ser-257 and Thr-261 by MAP kinase kinase kinases (MAP3Ks). As to expression, abundant expression is seen in the skeletal muscle. It is also widely expressed in other tissues.

The protein resides in the cytoplasm. Its subcellular location is the nucleus. The catalysed reaction is L-seryl-[protein] + ATP = O-phospho-L-seryl-[protein] + ADP + H(+). It carries out the reaction L-threonyl-[protein] + ATP = O-phospho-L-threonyl-[protein] + ADP + H(+). It catalyses the reaction L-tyrosyl-[protein] + ATP = O-phospho-L-tyrosyl-[protein] + ADP + H(+). Its activity is regulated as follows. Activated in response to a variety of cellular stresses, including UV and gamma-irradiation, heat shock, hyperosmolarity, T-cell receptor stimulation, peroxide and inflammatory cytokines. Also activated by developmental cues. MAP2K4/MKK4 is activated by the majority of MKKKs, such as MAP3K5/ASK1, MAP3K1/MEKK1, MAP3K7/TAK1, MAP3K10/MLK2, MAP3K11/MLK3, MAP3K12/DLK and MAP3K13/LZK. Functionally, dual specificity protein kinase which acts as an essential component of the MAP kinase signal transduction pathway. Essential component of the stress-activated protein kinase/c-Jun N-terminal kinase (SAP/JNK) signaling pathway. With MAP2K7/MKK7, is the one of the only known kinase to directly activate the stress-activated protein kinase/c-Jun N-terminal kinases MAPK8/JNK1, MAPK9/JNK2 and MAPK10/JNK3. MAP2K4/MKK4 and MAP2K7/MKK7 both activate the JNKs by phosphorylation, but they differ in their preference for the phosphorylation site in the Thr-Pro-Tyr motif. MAP2K4 shows preference for phosphorylation of the Tyr residue and MAP2K7/MKK7 for the Thr residue. The phosphorylation of the Thr residue by MAP2K7/MKK7 seems to be the prerequisite for JNK activation at least in response to pro-inflammatory cytokines, while other stimuli activate both MAP2K4/MKK4 and MAP2K7/MKK7 which synergistically phosphorylate JNKs. MAP2K4 is required for maintaining peripheral lymphoid homeostasis. The MKK/JNK signaling pathway is also involved in mitochondrial death signaling pathway, including the release cytochrome c, leading to apoptosis. Whereas MAP2K7/MKK7 exclusively activates JNKs, MAP2K4/MKK4 additionally activates the p38 MAPKs MAPK11, MAPK12, MAPK13 and MAPK14. The polypeptide is Dual specificity mitogen-activated protein kinase kinase 4 (MAP2K4) (Homo sapiens (Human)).